Consider the following 397-residue polypeptide: MALETKPAKDPAAEDKHELDPKRKAALDTALAQVEKSFGKGSAMRLGDQPEQNVEVIPTGSLALDMALGIGGLPKGRIVEIYGPESSGKTTLALHVVANAQKKGGVAAYIDAEHALDPAYARKLGVDTDSLIVSQPDNGEQALEIADMLIRSGALDVIVIDSVAALVPKAEIEGEMGDSHVGLQARLMSQALRKMTGALAQAGTTAIFINQLREKIGVFFGNPETTTGGKALKFYASVRLDIRRIQTLKNGDEAVGNRTRVKVVKNKMAPPFKSAEFDMLYGEGISREGSVIDMAQQVGVVKKSGSWFTYEGDQLGQGREKVRQFLKDNPAITEEIENKVKAEFGLIGSADQFAEDGEAAAAAAVSEAAAADVAKDSKAAAAPAAKTTRAKAGTAKA.

Positions 1–23 (MALETKPAKDPAAEDKHELDPKR) are disordered. Residue 83-90 (GPESSGKT) participates in ATP binding.

It belongs to the RecA family.

The protein resides in the cytoplasm. In terms of biological role, can catalyze the hydrolysis of ATP in the presence of single-stranded DNA, the ATP-dependent uptake of single-stranded DNA by duplex DNA, and the ATP-dependent hybridization of homologous single-stranded DNAs. It interacts with LexA causing its activation and leading to its autocatalytic cleavage. In Bifidobacterium longum (strain NCC 2705), this protein is Protein RecA.